Consider the following 395-residue polypeptide: Flap endonuclease 1 (395 aa).

An N-domain region spans residues 1 to 104 (MGIKHLFQVI…GELAKRTARK (104 aa)). D34 provides a ligand contact to Mg(2+). Residues R47 and R70 each coordinate DNA. A Mg(2+)-binding site is contributed by D86. Residues 102–121 (ARKAEATEAHEEAKETGTAE) are disordered. The interval 122–253 (DVEKFSRRTV…NTALKLIREH (132 aa)) is I-domain. The Mg(2+) site is built by E158, E160, D179, and D181. A DNA-binding site is contributed by E158. DNA contacts are provided by G231 and D233. D233 provides a ligand contact to Mg(2+). Residues 341–349 (QQSRLEGFF) form an interaction with PCNA region. Residues 348-395 (FFKPVARTDEEKASLKRKHDEKLQEQKKRKKEEAKAKKEAKAKPRGAA) are disordered. The segment covering 353–389 (ARTDEEKASLKRKHDEKLQEQKKRKKEEAKAKKEAKA) has biased composition (basic and acidic residues).

This sequence belongs to the XPG/RAD2 endonuclease family. FEN1 subfamily. As to quaternary structure, interacts with PCNA. Three molecules of fen1 bind to one PCNA trimer with each molecule binding to one PCNA monomer. PCNA stimulates the nuclease activity without altering cleavage specificity. It depends on Mg(2+) as a cofactor. Phosphorylated. Phosphorylation upon DNA damage induces relocalization to the nuclear plasma.

It is found in the nucleus. It localises to the nucleolus. The protein localises to the nucleoplasm. Its subcellular location is the mitochondrion. Structure-specific nuclease with 5'-flap endonuclease and 5'-3' exonuclease activities involved in DNA replication and repair. During DNA replication, cleaves the 5'-overhanging flap structure that is generated by displacement synthesis when DNA polymerase encounters the 5'-end of a downstream Okazaki fragment. It enters the flap from the 5'-end and then tracks to cleave the flap base, leaving a nick for ligation. Also involved in the long patch base excision repair (LP-BER) pathway, by cleaving within the apurinic/apyrimidinic (AP) site-terminated flap. Acts as a genome stabilization factor that prevents flaps from equilibrating into structures that lead to duplications and deletions. Also possesses 5'-3' exonuclease activity on nicked or gapped double-stranded DNA, and exhibits RNase H activity. Also involved in replication and repair of rDNA and in repairing mitochondrial DNA. The sequence is that of Flap endonuclease 1 (fen1) from Aspergillus fumigatus (strain CBS 144.89 / FGSC A1163 / CEA10) (Neosartorya fumigata).